The sequence spans 425 residues: Meiotic recombination protein spo-11 (425 aa).

Positions 1-38 (MYEYSFNPNIDHEPGSVESQQSTIYSDSDDSDDSFLDD) are disordered. Residues 15–158 (GSVESQQSTI…LNILSCGRGI (144 aa)) enclose the Topo IIA-type catalytic domain. The span at 27 to 38 (DSDDSDDSFLDD) shows a compositional bias: acidic residues. The active-site O-(5'-phospho-DNA)-tyrosine intermediate is the Y119. 2 residues coordinate Mg(2+): E202 and D255.

The protein belongs to the TOP6A family. It depends on Mg(2+) as a cofactor.

Its subcellular location is the nucleus. It carries out the reaction ATP-dependent breakage, passage and rejoining of double-stranded DNA.. In terms of biological role, required for meiotic recombination. Mediates DNA cleavage that forms the double-strand breaks (DSB) that initiate meiotic recombination. This Caenorhabditis elegans protein is Meiotic recombination protein spo-11 (spo-11).